The primary structure comprises 73 residues: Small ribosomal subunit protein bS18 (73 aa).

It belongs to the bacterial ribosomal protein bS18 family. As to quaternary structure, part of the 30S ribosomal subunit. Forms a tight heterodimer with protein bS6.

Functionally, binds as a heterodimer with protein bS6 to the central domain of the 16S rRNA, where it helps stabilize the platform of the 30S subunit. This is Small ribosomal subunit protein bS18 from Prochlorococcus marinus subsp. pastoris (strain CCMP1986 / NIES-2087 / MED4).